Reading from the N-terminus, the 284-residue chain is MLSQIAICIWVESTAILQDCQRALSADRYQLQVCESGEMLLEYAQTHRDQIDCLILVAANPSFRAVVQQLCFEGVVVPAIVVGDRDSEDPDEPAKEQLYHSAELHLGIHQLEQLPYQVDAALAEFLRLAPVETMADHIMLMGANHDPELSSQQRDLAQRLQERLGYLGVYYKRDPDRFLRNLPAYESQKLHQAMQTSYREIVLSYFSPNSNLNQSIDNFVNMAFFADVPVTKVVEIHMELMDEFAKKLRVEGRSEDILLDYRLTLIDVIAHLCEMYRRSIPRET.

Residues 1–135 (MLSQIAICIW…LRLAPVETMA (135 aa)) form a psR domain, binds oxidized quinones region. One can recognise a KaiA N-terminal domain in the interval 1 to 164 (MLSQIAICIW…DLAQRLQERL (164 aa)). Positions 165–173 (GYLGVYYKR) are flexible linker. In terms of domain architecture, KaiA C-terminal spans 174-282 (DPDRFLRNLP…CEMYRRSIPR (109 aa)).

Belongs to the KaiA family. In terms of assembly, homodimer. The KaiABC complex composition changes during the circadian cycle to control KaiC phosphorylation. Complexes KaiC(6), KaiA(2-4):KaiC(6), KaiB(6):KaiC(6) and KaiC(6):KaiB(6):KaiA(12) are among the most important forms, many form cooperatively. The KaiA:KaiB complex is only found at 20-24 hours in the circadian cycle (subjective night). Binds to the C-terminal A-loop of KaiC via a coiled-coil structure. KaiA and CikA compete for binding to KaiB(fs). CikA copurifies with this protein in the clock complex. Interacts with LdpA.

Binding of oxidized quinones (produced as darkness falls) prevents KaiA from stimulating KaiC autophosphorylation. Functionally, key component of the KaiABC oscillator complex, which constitutes the main circadian regulator in cyanobacteria. Complex composition changes during the circadian cycle to control KaiC phosphorylation. KaiA stimulates KaiC autophosphorylation, while KaiB sequesters KaiA, leading to KaiC autodephosphorylation. KaiA binding to the KaiC CII domain during the subjective day yields KaiA(2-4):KaiC(6) complexes which stimulate KaiC autophosphorylation. A KaiA dimer is sufficient to enhance KaiC hexamer phosphorylation. Phospho-Ser-431 KaiC accumulation triggers binding of KaiB during the subjective night to form the KaiB(6):KaiC(6) complex, leading to changes in the output regulators CikA and SasA. KaiB(6):KaiC(6) formation exposes a site for KaiA binding on KaiB that sequesters KaiA from KaiC's CII domain, making the KaiC(6):KaiB(6):KaiA(12) complex resulting in KaiC autodephosphorylation. Complete dephosphorylation of KaiC leads to dissociation of KaiA(2):KaiB(1), completing 1 cycle of the Kai oscillator. Its function is as follows. Circadian oscillations can be generated in vitro by incubating KaiA, KaiB and KaiC with 1 mM ATP. The cycle is self-sustainable for at least 3 cycles and resistant to temperature changes. A very robust clock is reconstituted with KaiA, KaiB, KaiC, SasA, CikA and RpaA; output is measured by transcription from an appropriate reporter. In terms of biological role, kaiA binds oxidized quinones via its N-terminal PsR domain and is able to sense redox signals directly; quinone analog DBMIB (2,5-dibromo-3-methyl-6-isopropyl-p-benzoquinone) blocks KaiA stimulation of KaiC phosphorylation. The homodimer binds up to 8 quinones in the crystal structure, 3 in the PsR domain and 1 via the C-terminal helical bundle. Binding of oxidized quinone to the KaiA C-terminal domain reduces the phosphorylation of KaiC slightly; quinones may interact in a complex manner with KaiA to mediate clock input. In Synechococcus elongatus (strain ATCC 33912 / PCC 7942 / FACHB-805) (Anacystis nidulans R2), this protein is Circadian clock oscillator protein KaiA.